A 470-amino-acid polypeptide reads, in one-letter code: Chromosomal replication initiator protein DnaA (470 aa).

The tract at residues 1 to 89 (MIESNHVVLW…YNVMVDKTSI (89 aa)) is domain I, interacts with DnaA modulators. Residues 89–130 (IPNQTVNLEASNRSTAVTPKSIVGGNKAPSFLKAPAVQDLDP) are domain II. Residues 131-348 (HLNPNYNFEN…GIVIAIMARS (218 aa)) are domain III, AAA+ region. Residues Gly176, Gly178, Lys179, and Thr180 each contribute to the ATP site. A domain IV, binds dsDNA region spans residues 349-470 (TIFNKEIDLD…EIESLLKKKA (122 aa)).

The protein belongs to the DnaA family. As to quaternary structure, oligomerizes as a right-handed, spiral filament on DNA at oriC.

The protein resides in the cytoplasm. Its function is as follows. Plays an essential role in the initiation and regulation of chromosomal replication. ATP-DnaA binds to the origin of replication (oriC) to initiate formation of the DNA replication initiation complex once per cell cycle. Binds the DnaA box (a 9 base pair repeat at the origin) and separates the double-stranded (ds)DNA. Forms a right-handed helical filament on oriC DNA; dsDNA binds to the exterior of the filament while single-stranded (ss)DNA is stabiized in the filament's interior. The ATP-DnaA-oriC complex binds and stabilizes one strand of the AT-rich DNA unwinding element (DUE), permitting loading of DNA polymerase. After initiation quickly degrades to an ADP-DnaA complex that is not apt for DNA replication. Binds acidic phospholipids. This chain is Chromosomal replication initiator protein DnaA, found in Bacteroides thetaiotaomicron (strain ATCC 29148 / DSM 2079 / JCM 5827 / CCUG 10774 / NCTC 10582 / VPI-5482 / E50).